The primary structure comprises 450 residues: Glucose-6-phosphate isomerase (450 aa).

Glutamate 290 (proton donor) is an active-site residue. Catalysis depends on residues histidine 311 and lysine 425.

The protein belongs to the GPI family.

It is found in the cytoplasm. The enzyme catalyses alpha-D-glucose 6-phosphate = beta-D-fructose 6-phosphate. Its pathway is carbohydrate biosynthesis; gluconeogenesis. It functions in the pathway carbohydrate degradation; glycolysis; D-glyceraldehyde 3-phosphate and glycerone phosphate from D-glucose: step 2/4. In terms of biological role, catalyzes the reversible isomerization of glucose-6-phosphate to fructose-6-phosphate. In Listeria monocytogenes serovar 1/2a (strain ATCC BAA-679 / EGD-e), this protein is Glucose-6-phosphate isomerase.